Reading from the N-terminus, the 178-residue chain is Large ribosomal subunit protein uL6 (178 aa).

The protein belongs to the universal ribosomal protein uL6 family. Part of the 50S ribosomal subunit.

Its function is as follows. This protein binds to the 23S rRNA, and is important in its secondary structure. It is located near the subunit interface in the base of the L7/L12 stalk, and near the tRNA binding site of the peptidyltransferase center. The sequence is that of Large ribosomal subunit protein uL6 from Frankia casuarinae (strain DSM 45818 / CECT 9043 / HFP020203 / CcI3).